The sequence spans 496 residues: T-cell activation inhibitor, mitochondrial (496 aa).

The stretch at 404 to 437 (KAQQARENMKRKEELKVIENELIQASTKKFSLEK) forms a coiled coil.

The protein resides in the mitochondrion. Functionally, may regulate T-cell apoptosis. This Homo sapiens (Human) protein is T-cell activation inhibitor, mitochondrial (TCAIM).